A 27-amino-acid polypeptide reads, in one-letter code: Conotoxin flf14a (27 aa).

2 disulfides stabilise this stretch: cysteine 6-cysteine 26 and cysteine 10-cysteine 22.

Expressed by the venom duct.

Its subcellular location is the secreted. The polypeptide is Conotoxin flf14a (Conus anabathrum floridanus (Florida cone)).